A 558-amino-acid chain; its full sequence is Ribonuclease J (558 aa).

Zn(2+) contacts are provided by histidine 81, histidine 83, aspartate 85, histidine 86, histidine 148, and aspartate 170. Histidine 371–histidine 375 contacts substrate. A Zn(2+)-binding site is contributed by histidine 397.

Belongs to the metallo-beta-lactamase superfamily. RNA-metabolizing metallo-beta-lactamase-like family. Bacterial RNase J subfamily. Homodimer. It depends on Zn(2+) as a cofactor.

Its subcellular location is the cytoplasm. An RNase that has endonuclease and 5'-3' exonuclease activity. The 5'-exonuclease activity acts on 5'-monophosphate but not 5'-triphosphate ends. Endonuclease activity can cleave within 4 nucleotides of the 5'-end of a triphosphorylated RNA. Plays the major role in pre-23S rRNA maturation, and a minor role in processing of pre-5S and pre-16S rRNA. This Mycolicibacterium smegmatis (strain ATCC 700084 / mc(2)155) (Mycobacterium smegmatis) protein is Ribonuclease J.